A 369-amino-acid chain; its full sequence is S-adenosylmethionine:tRNA ribosyltransferase-isomerase (369 aa).

It belongs to the QueA family. Monomer.

The protein localises to the cytoplasm. The catalysed reaction is 7-aminomethyl-7-carbaguanosine(34) in tRNA + S-adenosyl-L-methionine = epoxyqueuosine(34) in tRNA + adenine + L-methionine + 2 H(+). Its pathway is tRNA modification; tRNA-queuosine biosynthesis. Its function is as follows. Transfers and isomerizes the ribose moiety from AdoMet to the 7-aminomethyl group of 7-deazaguanine (preQ1-tRNA) to give epoxyqueuosine (oQ-tRNA). This chain is S-adenosylmethionine:tRNA ribosyltransferase-isomerase, found in Synechococcus sp. (strain CC9311).